An 86-amino-acid chain; its full sequence is Cell division topological specificity factor (86 aa).

Belongs to the MinE family.

Prevents the cell division inhibition by proteins MinC and MinD at internal division sites while permitting inhibition at polar sites. This ensures cell division at the proper site by restricting the formation of a division septum at the midpoint of the long axis of the cell. This chain is Cell division topological specificity factor, found in Photobacterium profundum (strain SS9).